Reading from the N-terminus, the 283-residue chain is Pantothenate synthetase (283 aa).

Residue Met30–His37 participates in ATP binding. Residue His37 is the Proton donor of the active site. Gln61 serves as a coordination point for (R)-pantoate. Gln61 provides a ligand contact to beta-alanine. Residue Gly149–Asp152 coordinates ATP. Gln155 contacts (R)-pantoate. ATP contacts are provided by residues Val178 and Leu186–Arg189.

This sequence belongs to the pantothenate synthetase family. As to quaternary structure, homodimer.

The protein localises to the cytoplasm. It catalyses the reaction (R)-pantoate + beta-alanine + ATP = (R)-pantothenate + AMP + diphosphate + H(+). Its pathway is cofactor biosynthesis; (R)-pantothenate biosynthesis; (R)-pantothenate from (R)-pantoate and beta-alanine: step 1/1. Catalyzes the condensation of pantoate with beta-alanine in an ATP-dependent reaction via a pantoyl-adenylate intermediate. In Pseudomonas aeruginosa (strain UCBPP-PA14), this protein is Pantothenate synthetase.